The primary structure comprises 369 residues: Velvet complex subunit B (369 aa).

Disordered regions lie at residues 1–54, 138–174, and 346–369; these read MYAV…STVH, SIST…VGQP, and KDGV…DNEY. Positions 13 to 27 are enriched in pro residues; it reads HPPPLSMDRIPPPST. One can recognise a Velvet domain in the interval 53 to 345; the sequence is VHDGRIWSLQ…ANQGIKIPIR (293 aa).

The protein belongs to the velvet family. VelB subfamily. In terms of assembly, component of the heterotrimeric velvet complex composed of laeA, veA and velB; VeA acting as a bridging protein between laeA and velB. Interacts directly with veA. Forms a heterodimeric complex with vosA; the formation of the velB-vosA complex is light-dependent.

It localises to the nucleus. The protein resides in the cytoplasm. Its function is as follows. Component of the velvet transcription factor complex that controls sexual/asexual developmental ratio in response to light, promoting sexual development in the darkness while stimulating asexual sporulation under illumination. The velvet complex acts as a global regulator for secondary metabolite gene expression. Component of the velB-VosA heterodimeric complex that plays a dual role in activating genes associated with spore maturation and repressing certain development-associated genes. The velB-VosA complex binds DNA through the DNA-binding domain of vosA that recognizes an 11-nucleotide consensus sequence 5'-CTGGCCGCGGC-3' consisting of two motifs in the promoters of key developmental regulatory genes. The vosA-velB complex binds to the beta-glucan synthase fksA gene promoter in asexual spores for repression. The sequence is that of Velvet complex subunit B from Emericella nidulans (strain FGSC A4 / ATCC 38163 / CBS 112.46 / NRRL 194 / M139) (Aspergillus nidulans).